A 261-amino-acid chain; its full sequence is Enoyl-[acyl-carrier-protein] reductase [NADH] FabI (261 aa).

NAD(+) is bound by residues G13, 19-20 (SI), 64-65 (DV), and I92. A95 is a substrate binding site. Active-site proton acceptor residues include Y147 and Y157. NAD(+) contacts are provided by residues K164 and 193-197 (IKTLA).

The protein belongs to the short-chain dehydrogenases/reductases (SDR) family. FabI subfamily. As to quaternary structure, homotetramer.

The enzyme catalyses a 2,3-saturated acyl-[ACP] + NAD(+) = a (2E)-enoyl-[ACP] + NADH + H(+). It functions in the pathway lipid metabolism; fatty acid biosynthesis. Catalyzes the reduction of a carbon-carbon double bond in an enoyl moiety that is covalently linked to an acyl carrier protein (ACP). Involved in the elongation cycle of fatty acid which are used in the lipid metabolism. This chain is Enoyl-[acyl-carrier-protein] reductase [NADH] FabI (fabI), found in Neisseria meningitidis serogroup B (strain ATCC BAA-335 / MC58).